The following is a 210-amino-acid chain: NADH dehydrogenase [ubiquinone] iron-sulfur protein 8, mitochondrial (210 aa).

Residues 1 to 34 (MRCLTTPMLLRALAQAARAGPPGGRSLHSSAVAA) constitute a mitochondrion transit peptide. 4Fe-4S ferredoxin-type domains follow at residues 102–131 (RRYP…IEAE) and 141–170 (TRYD…EGPN). 8 residues coordinate [4Fe-4S] cluster: Cys111, Cys114, Cys117, Cys121, Cys150, Cys153, Cys156, and Cys160.

Belongs to the complex I 23 kDa subunit family. As to quaternary structure, core subunit of respiratory chain NADH dehydrogenase (Complex I) which is composed of 45 different subunits. This is a component of the iron-sulfur (IP) fragment of the enzyme. Interacts with RAB5IF. [4Fe-4S] cluster serves as cofactor. Expressed in all tissues with the highest level in heart and skeletal muscle and the lowest level in lung.

It is found in the mitochondrion inner membrane. It carries out the reaction a ubiquinone + NADH + 5 H(+)(in) = a ubiquinol + NAD(+) + 4 H(+)(out). Its function is as follows. Core subunit of the mitochondrial membrane respiratory chain NADH dehydrogenase (Complex I) which catalyzes electron transfer from NADH through the respiratory chain, using ubiquinone as an electron acceptor. Essential for the catalytic activity and assembly of complex I. The chain is NADH dehydrogenase [ubiquinone] iron-sulfur protein 8, mitochondrial (NDUFS8) from Homo sapiens (Human).